We begin with the raw amino-acid sequence, 441 residues long: NADH-quinone oxidoreductase subunit D 1 (441 aa).

This sequence belongs to the complex I 49 kDa subunit family. NDH-1 is composed of 14 different subunits. Subunits NuoB, C, D, E, F, and G constitute the peripheral sector of the complex.

It is found in the cell membrane. The enzyme catalyses a quinone + NADH + 5 H(+)(in) = a quinol + NAD(+) + 4 H(+)(out). NDH-1 shuttles electrons from NADH, via FMN and iron-sulfur (Fe-S) centers, to quinones in the respiratory chain. The immediate electron acceptor for the enzyme in this species is believed to be a menaquinone. Couples the redox reaction to proton translocation (for every two electrons transferred, four hydrogen ions are translocated across the cytoplasmic membrane), and thus conserves the redox energy in a proton gradient. In Salinispora arenicola (strain CNS-205), this protein is NADH-quinone oxidoreductase subunit D 1.